The primary structure comprises 466 residues: Adenylosuccinate lyase (466 aa).

Substrate-binding positions include 21-22 (RY), 97-99 (NHD), and 130-131 (TS). The Proton donor/acceptor role is filled by histidine 180. Residue glutamine 259 participates in substrate binding. The active-site Proton donor/acceptor is the serine 307. The substrate site is built by arginine 347, serine 352, and arginine 356.

This sequence belongs to the lyase 1 family. Adenylosuccinate lyase subfamily. As to quaternary structure, homotetramer. Residues from neighboring subunits contribute catalytic and substrate-binding residues to each active site.

The enzyme catalyses N(6)-(1,2-dicarboxyethyl)-AMP = fumarate + AMP. The catalysed reaction is (2S)-2-[5-amino-1-(5-phospho-beta-D-ribosyl)imidazole-4-carboxamido]succinate = 5-amino-1-(5-phospho-beta-D-ribosyl)imidazole-4-carboxamide + fumarate. It participates in purine metabolism; AMP biosynthesis via de novo pathway; AMP from IMP: step 2/2. The protein operates within purine metabolism; IMP biosynthesis via de novo pathway; 5-amino-1-(5-phospho-D-ribosyl)imidazole-4-carboxamide from 5-amino-1-(5-phospho-D-ribosyl)imidazole-4-carboxylate: step 2/2. This is Adenylosuccinate lyase (purB) from Dictyostelium discoideum (Social amoeba).